The chain runs to 342 residues: MTNGYIGSYTKKNGKGIYRFELNENQSRIDLLEIGFELEASTYLVRNNEVLYGINKEGEQCGVASLKIDDNGELHLLNKCLSSKAGTGCYVSISEDKRYLFEAVYGAGIIRMYELNTHTGEIIRLIQELAHDFPTGTHERQDHPHAHYINQTPDGKYVAVTDLGADRIVTYKFDDNGFEFYKESLFKDSDGTRHIEFHDNGKFAYVVHELSNTVSVAEYNDGKFEELERHLTIPENFDGDTKLAAVRLSHDQQFLYVSNRGHDSIAIFKVLDNGQHLELVTITESGGQFPRDFNIASSDDLLVCAHEQGDSVVTVFERSKETGKITLCDNTRVASEGVCVIF.

This sequence belongs to the cycloisomerase 2 family.

This is an uncharacterized protein from Staphylococcus aureus (strain N315).